Reading from the N-terminus, the 1730-residue chain is Nebulin-related-anchoring protein (1730 aa).

Residues 4 to 64 (QPCSRCGYGV…HAHNPKNNTF (61 aa)) form the LIM zinc-binding domain. 44 Nebulin repeats span residues 63 to 97 (TFTS…QCKS), 156 to 166 (EYTEDYEQPRG), 175 to 202 (TPAY…ERIS), 203 to 237 (RFST…QQRG), 246 to 273 (TPAY…KEMR), 298 to 307 (YPEEYEEHRG), 316 to 343 (TPAY…KMKG), 348 to 382 (HSLP…SSRG), 389 to 417 (ETPQ…NHMR), 419 to 453 (RYEG…HDIV), 487 to 521 (KYSS…KNKL), 522 to 556 (NYTL…KTKG), 558 to 592 (GFEM…KTKG), 602 to 626 (LLHS…ESKT), 627 to 661 (RFHL…EYTV), 662 to 692 (LPED…WMKG), 702 to 724 (NLEQ…RVDE), 726 to 760 (KFTS…QSVH), 761 to 795 (QYTI…NQKA), 797 to 831 (GFEL…RSRG), 844 to 869 (QMSH…DTKS), 870 to 896 (QCHV…VGYK), 901 to 935 (HFTA…WMKG), 945 to 963 (NVEQ…KYRQ), 969 to 1003 (KFTS…NIKH), 1004 to 1038 (HYTP…KLRD), 1040 to 1074 (GYKL…KMKG), 1078 to 1112 (GSRS…HSKA), 1113 to 1139 (QFHL…QDYK), 1144 to 1178 (QYTS…FMRG), 1183 to 1206 (IPGT…KYRQ), 1212 to 1246 (KYTA…DARH), 1247 to 1281 (EYTM…NLRA), 1283 to 1317 (GYKL…KERG), 1321 to 1355 (GPQS…SSQA), 1356 to 1390 (QFHL…KFTA), 1391 to 1421 (LPED…GMKG), 1429 to 1449 (SPQM…KYRK), 1455 to 1481 (KFTT…RMYR), 1490 to 1524 (RYTL…QTRA), 1526 to 1560 (SYDF…RDRG), 1564 to 1598 (GYRS…KSRS), 1599 to 1626 (QFHS…HYRQ), and 1640 to 1664 (LRHA…LTRG). The residue at position 1081 (serine 1081) is a Phosphoserine. The segment at 1595–1620 (KSRSQFHSSTDQPGLLQAKRSQQLAS) is disordered. Residues 1596 to 1606 (SRSQFHSSTDQ) show a composition bias toward polar residues.

In terms of assembly, interacts with actin, alpha-actinin, KLHL41, TLN1 and VCL. Interacts with CSRP3. As to expression, expressed in cardiac and skeletal muscle.

Functionally, may be involved in anchoring the terminal actin filaments in the myofibril to the membrane and in transmitting tension from the myofibrils to the extracellular matrix. This Homo sapiens (Human) protein is Nebulin-related-anchoring protein.